A 201-amino-acid polypeptide reads, in one-letter code: Recombination protein RecR (201 aa).

A C4-type zinc finger spans residues 60 to 75; it reads CSVCGNVDTSDPCTIC. The region spanning 83-178 is the Toprim domain; that stretch reads ATLIVVEDVS…RVTKLAHGVP (96 aa).

Belongs to the RecR family.

In terms of biological role, may play a role in DNA repair. It seems to be involved in an RecBC-independent recombinational process of DNA repair. It may act with RecF and RecO. This chain is Recombination protein RecR, found in Chelativorans sp. (strain BNC1).